We begin with the raw amino-acid sequence, 312 residues long: tRNA dimethylallyltransferase (312 aa).

An ATP-binding site is contributed by 14–21; that stretch reads GPTASGKS. 16–21 lines the substrate pocket; the sequence is TASGKS. Interaction with substrate tRNA regions lie at residues 39 to 42 and 163 to 167; these read DSSL and QRLQR.

Belongs to the IPP transferase family. In terms of assembly, monomer. Mg(2+) is required as a cofactor.

The catalysed reaction is adenosine(37) in tRNA + dimethylallyl diphosphate = N(6)-dimethylallyladenosine(37) in tRNA + diphosphate. In terms of biological role, catalyzes the transfer of a dimethylallyl group onto the adenine at position 37 in tRNAs that read codons beginning with uridine, leading to the formation of N6-(dimethylallyl)adenosine (i(6)A). The chain is tRNA dimethylallyltransferase from Methylococcus capsulatus (strain ATCC 33009 / NCIMB 11132 / Bath).